Reading from the N-terminus, the 693-residue chain is Translation factor GUF1 homolog, mitochondrial (693 aa).

The span at 51 to 63 (SSSSTEKPTTSGT) shows a compositional bias: polar residues. A disordered region spans residues 51 to 78 (SSSSTEKPTTSGTINGGGGKQKAASQPK). The 183-residue stretch at 88–270 (QKIRNFSIIA…RIVQMVPPPP (183 aa)) folds into the tr-type G domain. GTP contacts are provided by residues 97–104 (AHIDHGKS), 163–167 (DTPGH), and 217–220 (NKID).

It belongs to the TRAFAC class translation factor GTPase superfamily. Classic translation factor GTPase family. LepA subfamily.

Its subcellular location is the mitochondrion inner membrane. It carries out the reaction GTP + H2O = GDP + phosphate + H(+). Promotes mitochondrial protein synthesis. May act as a fidelity factor of the translation reaction, by catalyzing a one-codon backward translocation of tRNAs on improperly translocated ribosomes. Binds to mitochondrial ribosomes in a GTP-dependent manner. This Phaeodactylum tricornutum (strain CCAP 1055/1) protein is Translation factor GUF1 homolog, mitochondrial.